Consider the following 278-residue polypeptide: 4-hydroxy-3-methylbut-2-enyl diphosphate reductase (278 aa).

Position 12 (Cys-12) interacts with [4Fe-4S] cluster. (2E)-4-hydroxy-3-methylbut-2-enyl diphosphate-binding residues include His-41 and His-74. Residues His-41 and His-74 each coordinate dimethylallyl diphosphate. Residues His-41 and His-74 each contribute to the isopentenyl diphosphate site. Residue Cys-96 coordinates [4Fe-4S] cluster. His-124 contacts (2E)-4-hydroxy-3-methylbut-2-enyl diphosphate. Position 124 (His-124) interacts with dimethylallyl diphosphate. His-124 provides a ligand contact to isopentenyl diphosphate. Glu-126 functions as the Proton donor in the catalytic mechanism. Position 161 (Thr-161) interacts with (2E)-4-hydroxy-3-methylbut-2-enyl diphosphate. Cys-189 is a binding site for [4Fe-4S] cluster. (2E)-4-hydroxy-3-methylbut-2-enyl diphosphate contacts are provided by Ser-217, Asn-219, and Ser-261. Dimethylallyl diphosphate is bound by residues Ser-217, Asn-219, and Ser-261. Isopentenyl diphosphate is bound by residues Ser-217, Asn-219, and Ser-261.

The protein belongs to the IspH family. The cofactor is [4Fe-4S] cluster.

The catalysed reaction is isopentenyl diphosphate + 2 oxidized [2Fe-2S]-[ferredoxin] + H2O = (2E)-4-hydroxy-3-methylbut-2-enyl diphosphate + 2 reduced [2Fe-2S]-[ferredoxin] + 2 H(+). It catalyses the reaction dimethylallyl diphosphate + 2 oxidized [2Fe-2S]-[ferredoxin] + H2O = (2E)-4-hydroxy-3-methylbut-2-enyl diphosphate + 2 reduced [2Fe-2S]-[ferredoxin] + 2 H(+). Its pathway is isoprenoid biosynthesis; dimethylallyl diphosphate biosynthesis; dimethylallyl diphosphate from (2E)-4-hydroxy-3-methylbutenyl diphosphate: step 1/1. The protein operates within isoprenoid biosynthesis; isopentenyl diphosphate biosynthesis via DXP pathway; isopentenyl diphosphate from 1-deoxy-D-xylulose 5-phosphate: step 6/6. Catalyzes the conversion of 1-hydroxy-2-methyl-2-(E)-butenyl 4-diphosphate (HMBPP) into a mixture of isopentenyl diphosphate (IPP) and dimethylallyl diphosphate (DMAPP). Acts in the terminal step of the DOXP/MEP pathway for isoprenoid precursor biosynthesis. This Anaeromyxobacter sp. (strain K) protein is 4-hydroxy-3-methylbut-2-enyl diphosphate reductase.